Here is a 267-residue protein sequence, read N- to C-terminus: Orotidine 5'-phosphate decarboxylase (267 aa).

The Proton donor role is filled by K93.

The protein belongs to the OMP decarboxylase family. Type 2 subfamily.

It carries out the reaction orotidine 5'-phosphate + H(+) = UMP + CO2. It participates in pyrimidine metabolism; UMP biosynthesis via de novo pathway; UMP from orotate: step 2/2. The protein is Orotidine 5'-phosphate decarboxylase of Herpetosiphon aurantiacus (strain ATCC 23779 / DSM 785 / 114-95).